A 971-amino-acid chain; its full sequence is Exportin-2 (971 aa).

Methionine 1 carries the N-acetylmethionine modification. One can recognise an Importin N-terminal domain in the interval 29-102; sequence AEKFLESVEG…KANIVHLMLS (74 aa). A Phosphoserine modification is found at serine 112. 2 positions are modified to N6-acetyllysine: lysine 574 and lysine 824. Phosphoserine is present on serine 931.

The protein belongs to the XPO2/CSE1 family. In terms of assembly, found in a complex with CSE1L/XPO2, Ran and KPNA2. Binds with high affinity to importin-alpha only in the presence of RanGTP. The complex is dissociated by the combined action of RanBP1 and RanGAP1. Interacts with CFTR.

The protein localises to the cytoplasm. The protein resides in the nucleus. Its function is as follows. Export receptor for importin-alpha. Mediates importin-alpha re-export from the nucleus to the cytoplasm after import substrates (cargos) have been released into the nucleoplasm. In the nucleus binds cooperatively to importin-alpha and to the GTPase Ran in its active GTP-bound form. Docking of this trimeric complex to the nuclear pore complex (NPC) is mediated through binding to nucleoporins. Upon transit of a nuclear export complex into the cytoplasm, disassembling of the complex and hydrolysis of Ran-GTP to Ran-GDP (induced by RANBP1 and RANGAP1, respectively) cause release of the importin-alpha from the export receptor. CSE1L/XPO2 then return to the nuclear compartment and mediate another round of transport. The directionality of nuclear export is thought to be conferred by an asymmetric distribution of the GTP- and GDP-bound forms of Ran between the cytoplasm and nucleus. The polypeptide is Exportin-2 (CSE1L) (Bos taurus (Bovine)).